A 255-amino-acid chain; its full sequence is Imidazole glycerol phosphate synthase subunit HisF (255 aa).

Catalysis depends on residues Asp-11 and Asp-130.

The protein belongs to the HisA/HisF family. As to quaternary structure, heterodimer of HisH and HisF.

It is found in the cytoplasm. The enzyme catalyses 5-[(5-phospho-1-deoxy-D-ribulos-1-ylimino)methylamino]-1-(5-phospho-beta-D-ribosyl)imidazole-4-carboxamide + L-glutamine = D-erythro-1-(imidazol-4-yl)glycerol 3-phosphate + 5-amino-1-(5-phospho-beta-D-ribosyl)imidazole-4-carboxamide + L-glutamate + H(+). It functions in the pathway amino-acid biosynthesis; L-histidine biosynthesis; L-histidine from 5-phospho-alpha-D-ribose 1-diphosphate: step 5/9. Its function is as follows. IGPS catalyzes the conversion of PRFAR and glutamine to IGP, AICAR and glutamate. The HisF subunit catalyzes the cyclization activity that produces IGP and AICAR from PRFAR using the ammonia provided by the HisH subunit. This is Imidazole glycerol phosphate synthase subunit HisF from Prochlorococcus marinus subsp. pastoris (strain CCMP1986 / NIES-2087 / MED4).